The sequence spans 516 residues: Methionine--tRNA ligase (516 aa).

The 'HIGH' region signature appears at 14-24; sequence SYPNGKPHIGH. Positions 302–306 match the 'KMSKS' region motif; it reads KMSKS. ATP is bound at residue lysine 305.

The protein belongs to the class-I aminoacyl-tRNA synthetase family. MetG type 2B subfamily. As to quaternary structure, monomer.

It is found in the cytoplasm. The enzyme catalyses tRNA(Met) + L-methionine + ATP = L-methionyl-tRNA(Met) + AMP + diphosphate. In terms of biological role, is required not only for elongation of protein synthesis but also for the initiation of all mRNA translation through initiator tRNA(fMet) aminoacylation. In Rhizobium meliloti (strain 1021) (Ensifer meliloti), this protein is Methionine--tRNA ligase.